We begin with the raw amino-acid sequence, 279 residues long: Virginiamycin B lyase (279 aa).

H215 contacts substrate. Residue E253 participates in Mg(2+) binding. H255 acts as the Proton acceptor in catalysis. E270 provides a ligand contact to Mg(2+).

It belongs to the Vgb family. In terms of assembly, monomer. Mg(2+) serves as cofactor.

Its function is as follows. Inactivates the type B streptogramin antibiotics by linearizing the lactone ring at the ester linkage, generating a free phenylglycine carboxylate and converting the threonyl moiety into 2-amino-butenoic acid. The protein is Virginiamycin B lyase of Nocardia farcinica (strain IFM 10152).